The following is a 228-amino-acid chain: L-ribulose-5-phosphate 4-epimerase UlaF (228 aa).

Substrate contacts are provided by residues 26 to 27, 43 to 44, and 72 to 73; these read GN, SG, and SS. Positions 74, 93, and 95 each coordinate Zn(2+). Asp-118 serves as the catalytic Proton donor/acceptor. A Zn(2+)-binding site is contributed by His-167. Tyr-225 functions as the Proton donor/acceptor in the catalytic mechanism.

Belongs to the aldolase class II family. AraD/FucA subfamily. The cofactor is Zn(2+).

The enzyme catalyses L-ribulose 5-phosphate = D-xylulose 5-phosphate. It functions in the pathway cofactor degradation; L-ascorbate degradation; D-xylulose 5-phosphate from L-ascorbate: step 4/4. Its function is as follows. Catalyzes the isomerization of L-ribulose 5-phosphate to D-xylulose 5-phosphate. Is involved in the anaerobic L-ascorbate utilization. This chain is L-ribulose-5-phosphate 4-epimerase UlaF, found in Shigella boydii serotype 18 (strain CDC 3083-94 / BS512).